The sequence spans 390 residues: 1-deoxy-D-xylulose 5-phosphate reductoisomerase (390 aa).

NADPH is bound by residues Thr-10, Gly-11, Ser-12, Ile-13, Ala-36, Lys-37, Asn-38, and Asn-122. Lys-123 contributes to the 1-deoxy-D-xylulose 5-phosphate binding site. Glu-124 provides a ligand contact to NADPH. Asp-148 is a Mn(2+) binding site. 1-deoxy-D-xylulose 5-phosphate is bound by residues Ser-149, Glu-150, Ser-174, and His-197. Mn(2+) is bound at residue Glu-150. Gly-203 lines the NADPH pocket. 1-deoxy-D-xylulose 5-phosphate contacts are provided by Ser-210, Asn-215, Lys-216, and Glu-219. Residue Glu-219 participates in Mn(2+) binding.

This sequence belongs to the DXR family. Mg(2+) serves as cofactor. Mn(2+) is required as a cofactor.

It carries out the reaction 2-C-methyl-D-erythritol 4-phosphate + NADP(+) = 1-deoxy-D-xylulose 5-phosphate + NADPH + H(+). Its pathway is isoprenoid biosynthesis; isopentenyl diphosphate biosynthesis via DXP pathway; isopentenyl diphosphate from 1-deoxy-D-xylulose 5-phosphate: step 1/6. Its function is as follows. Catalyzes the NADPH-dependent rearrangement and reduction of 1-deoxy-D-xylulose-5-phosphate (DXP) to 2-C-methyl-D-erythritol 4-phosphate (MEP). The chain is 1-deoxy-D-xylulose 5-phosphate reductoisomerase from Trichlorobacter lovleyi (strain ATCC BAA-1151 / DSM 17278 / SZ) (Geobacter lovleyi).